Here is a 299-residue protein sequence, read N- to C-terminus: ATP phosphoribosyltransferase (299 aa).

It belongs to the ATP phosphoribosyltransferase family. Long subfamily. The cofactor is Mg(2+).

It is found in the cytoplasm. It catalyses the reaction 1-(5-phospho-beta-D-ribosyl)-ATP + diphosphate = 5-phospho-alpha-D-ribose 1-diphosphate + ATP. The protein operates within amino-acid biosynthesis; L-histidine biosynthesis; L-histidine from 5-phospho-alpha-D-ribose 1-diphosphate: step 1/9. Feedback inhibited by histidine. Its function is as follows. Catalyzes the condensation of ATP and 5-phosphoribose 1-diphosphate to form N'-(5'-phosphoribosyl)-ATP (PR-ATP). Has a crucial role in the pathway because the rate of histidine biosynthesis seems to be controlled primarily by regulation of HisG enzymatic activity. This Shewanella oneidensis (strain ATCC 700550 / JCM 31522 / CIP 106686 / LMG 19005 / NCIMB 14063 / MR-1) protein is ATP phosphoribosyltransferase.